We begin with the raw amino-acid sequence, 269 residues long: Phosphate import ATP-binding protein PstB (269 aa).

The ABC transporter domain occupies L14–N253. G46–S53 lines the ATP pocket.

The protein belongs to the ABC transporter superfamily. Phosphate importer (TC 3.A.1.7) family. The complex is composed of two ATP-binding proteins (PstB), two transmembrane proteins (PstC and PstA) and a solute-binding protein (PstS).

Its subcellular location is the cell inner membrane. The catalysed reaction is phosphate(out) + ATP + H2O = ADP + 2 phosphate(in) + H(+). Its function is as follows. Part of the ABC transporter complex PstSACB involved in phosphate import. Responsible for energy coupling to the transport system. In Prochlorococcus marinus (strain MIT 9312), this protein is Phosphate import ATP-binding protein PstB.